A 404-amino-acid chain; its full sequence is Cysteine desulfurase IscS (404 aa).

Pyridoxal 5'-phosphate is bound by residues 75 to 76, Asn-155, Gln-183, and 203 to 205; these read AT and SGH. Lys-206 is modified (N6-(pyridoxal phosphate)lysine). Thr-243 is a binding site for pyridoxal 5'-phosphate. Catalysis depends on Cys-328, which acts as the Cysteine persulfide intermediate. Cys-328 serves as a coordination point for [2Fe-2S] cluster.

Belongs to the class-V pyridoxal-phosphate-dependent aminotransferase family. NifS/IscS subfamily. In terms of assembly, homodimer. Forms a heterotetramer with IscU, interacts with other sulfur acceptors. Pyridoxal 5'-phosphate serves as cofactor.

The protein localises to the cytoplasm. The catalysed reaction is (sulfur carrier)-H + L-cysteine = (sulfur carrier)-SH + L-alanine. The protein operates within cofactor biosynthesis; iron-sulfur cluster biosynthesis. Functionally, master enzyme that delivers sulfur to a number of partners involved in Fe-S cluster assembly, tRNA modification or cofactor biosynthesis. Catalyzes the removal of elemental sulfur atoms from cysteine to produce alanine. Functions as a sulfur delivery protein for Fe-S cluster synthesis onto IscU, an Fe-S scaffold assembly protein, as well as other S acceptor proteins. The chain is Cysteine desulfurase IscS from Pectobacterium atrosepticum (strain SCRI 1043 / ATCC BAA-672) (Erwinia carotovora subsp. atroseptica).